A 285-amino-acid chain; its full sequence is Chlorite dismutase (285 aa).

A signal peptide spans 1–38; that stretch reads MKVRCVSLVAAGLLTIAGSAIGQPAPAPMPAMAPAAKP. Glu-105 contributes to the Ca(2+) binding site. A heme-binding site is contributed by His-205. Residue Arg-218 is the Proton acceptor of the active site. The Ca(2+) site is built by Asp-227 and Thr-266.

The protein belongs to the chlorite dismutase family. In terms of assembly, homopentamer. Heme b serves as cofactor.

The protein resides in the periplasm. It catalyses the reaction chloride + O2 = chlorite. Catalyzes the heme-dependent decomposition of chlorite to O(2) and chloride with high efficiency and specificity. Used to detoxify chlorite, a by-product of the reduction of perchlorate, a primarily anthropogenic pollutant, in perchlorate-respiring bacteria. The sequence is that of Chlorite dismutase (cld) from Ideonella dechloratans.